The sequence spans 146 residues: [Ribosomal protein bS18]-alanine N-acetyltransferase (146 aa).

In terms of domain architecture, N-acetyltransferase spans 2 to 146; sequence SIISQIEACD…ENAVVMACYL (145 aa). Position 69 to 71 (69 to 71) interacts with acetyl-CoA; it reads IAI. Glutamate 103 functions as the Proton acceptor in the catalytic mechanism. Residue asparagine 108 coordinates acetyl-CoA. Tyrosine 114 serves as the catalytic Proton donor.

Belongs to the acetyltransferase family. RimI subfamily.

It localises to the cytoplasm. The catalysed reaction is N-terminal L-alanyl-[ribosomal protein bS18] + acetyl-CoA = N-terminal N(alpha)-acetyl-L-alanyl-[ribosomal protein bS18] + CoA + H(+). Functionally, acetylates the N-terminal alanine of ribosomal protein bS18. The polypeptide is [Ribosomal protein bS18]-alanine N-acetyltransferase (Haemophilus influenzae (strain ATCC 51907 / DSM 11121 / KW20 / Rd)).